Consider the following 445-residue polypeptide: C4-dicarboxylate transport protein (445 aa).

Transmembrane regions (helical) follow at residues Val24–Pro44, Leu62–Ile82, Phe105–Ala125, Gly163–Gly183, Phe201–Phe221, Leu234–Gly254, Ile322–Gly342, and Ala370–Ile390.

This sequence belongs to the dicarboxylate/amino acid:cation symporter (DAACS) (TC 2.A.23) family.

Its subcellular location is the cell inner membrane. Its function is as follows. Responsible for the transport of dicarboxylates such as succinate, fumarate, and malate from the periplasm across the membrane. The protein is C4-dicarboxylate transport protein of Rhodopseudomonas palustris (strain ATCC BAA-98 / CGA009).